Here is a 762-residue protein sequence, read N- to C-terminus: Hyperosmolality-gated Ca2+ permeable channel 2.2 (762 aa).

The next 10 membrane-spanning stretches (helical) occupy residues 3–23, 90–110, 144–164, 354–374, 402–422, 445–465, 500–520, 557–577, 594–614, and 615–635; these read VSALLTSAGINIAICVVLVSL, MVICSIRIFSIVAVVCLAFVL, LWVHCLSLYIISSAACALLYF, IATLVGAIAFMFVFLFPVTFV, VITGYLPSVILVLFFYTVPPL, KILYFTIWNVFFVNILSGSVI, GWAGLACEIMQPVGLIWNLIA, VIAPLILPFLLIYFFFAYLIY, QYWPVFHNTTIFSLILSQVIA, and LGFFGLKLSTVASGFTIPLIL.

This sequence belongs to the CSC1 (TC 1.A.17) family.

The protein resides in the membrane. Its function is as follows. Acts as an osmosensitive calcium-permeable cation channel. The polypeptide is Hyperosmolality-gated Ca2+ permeable channel 2.2 (Arabidopsis thaliana (Mouse-ear cress)).